A 181-amino-acid chain; its full sequence is Bifunctional protein PyrR (181 aa).

Substrate contacts are provided by residues 39-40 (RR), 104-112 (DDVLYTGRT), arginine 137, and valine 161. Positions 100–112 (VILVDDVLYTGRT) match the PRPP-binding motif.

Belongs to the purine/pyrimidine phosphoribosyltransferase family. PyrR subfamily.

The enzyme catalyses UMP + diphosphate = 5-phospho-alpha-D-ribose 1-diphosphate + uracil. In terms of biological role, regulates the transcription of the pyrimidine nucleotide (pyr) operon in response to exogenous pyrimidines. Functionally, also displays a weak uracil phosphoribosyltransferase activity which is not physiologically significant. In Pasteurella multocida (strain Pm70), this protein is Bifunctional protein PyrR.